A 111-amino-acid polypeptide reads, in one-letter code: uncharacterized protein (111 aa).

This sequence belongs to the asfivirus E111R family.

This is an uncharacterized protein from African swine fever virus (strain Badajoz 1971 Vero-adapted) (Ba71V).